Consider the following 119-residue polypeptide: Protein BEX4 (119 aa).

The tract at residues 1–53 is disordered; the sequence is MESKEELAANNLNGENAQQENEGREQAPTQNEETRHLGGGEGQKPGGNIRRGR. The segment covering 8–20 has biased composition (low complexity); sequence AANNLNGENAQQE. The tract at residues 31 to 89 is interaction with SIRT2; the sequence is NEETRHLGGGEGQKPGGNIRRGRVRRLVPNFRWAIPNRHIEHNEARDDVERFVGQMMEI. The tract at residues 31–119 is interaction with alpha-tubulin; that stretch reads NEETRHLGGG…DNHYDFCLIP (89 aa). Cys116 contacts Zn(2+).

The protein belongs to the BEX family. As to quaternary structure, interacts with alpha-tubulin. Interacts with SIRT2. Ubiquitinated and degraded by the proteasome.

The protein resides in the cytoplasm. It is found in the cytoskeleton. It localises to the spindle pole. The protein localises to the nucleus. Its function is as follows. May play a role in microtubule deacetylation by negatively regulating the SIRT2 deacetylase activity toward alpha-tubulin and thereby participate in the control of cell cycle progression and genomic stability. In absence of reductive stress, acts as a pseudosubstrate for the CRL2(FEM1B) complex: associates with FEM1B via zinc, thereby preventing association between FEM1B and its substrates. This Pongo abelii (Sumatran orangutan) protein is Protein BEX4.